Reading from the N-terminus, the 257-residue chain is 2,3,4,5-tetrahydropyridine-2,6-dicarboxylate N-acetyltransferase (257 aa).

Belongs to the transferase hexapeptide repeat family. DapH subfamily.

The enzyme catalyses (S)-2,3,4,5-tetrahydrodipicolinate + acetyl-CoA + H2O = L-2-acetamido-6-oxoheptanedioate + CoA. Its pathway is amino-acid biosynthesis; L-lysine biosynthesis via DAP pathway; LL-2,6-diaminopimelate from (S)-tetrahydrodipicolinate (acetylase route): step 1/3. Functionally, catalyzes the transfer of an acetyl group from acetyl-CoA to tetrahydrodipicolinate. In Lactococcus lactis subsp. cremoris (strain SK11), this protein is 2,3,4,5-tetrahydropyridine-2,6-dicarboxylate N-acetyltransferase.